The chain runs to 298 residues: ADP/ATP translocase 1 (298 aa).

Residues 1–7 lie on the Mitochondrial intermembrane side of the membrane; the sequence is MSDQALS. Serine 2 is modified (N-acetylserine). A Solcar 1 repeat occupies 6–98; it reads LSFLKDFLAG…FAFKDKYKQI (93 aa). Phosphoserine is present on serine 7. A helical transmembrane segment spans residues 8–37; it reads FLKDFLAGGVAAAVSKTAVAPIERVKLLLQ. The Mitochondrial matrix segment spans residues 38–74; the sequence is VQHASKQISAEKQYKGIIDCVVRIPKEQGFLSFWRGN. Lysine 52 is subject to N6,N6,N6-trimethyllysine. A helical membrane pass occupies residues 75–99; the sequence is LANVIRYFPTQALNFAFKDKYKQIF. Residues arginine 80 and lysine 92 each contribute to the ADP site. Residues 100-109 lie on the Mitochondrial intermembrane side of the membrane; sequence LGGVDRHKQF. Residues 110–130 form a helical membrane-spanning segment; the sequence is WRYFAGNLASGGAAGATSLCF. 2 Solcar repeats span residues 111 to 201 and 212 to 297; these read RYFA…AKGM and VSWM…IKKY. Residues 131 to 178 are Mitochondrial matrix-facing; that stretch reads VYPLDFARTRLAADVGKGAAQREFSGLGNCLTKIFKSDGLRGLYQGFN. Lysine 147 carries the post-translational modification N6-succinyllysine. Cysteine 160 carries the post-translational modification S-nitrosocysteine. Residues 179 to 199 form a helical membrane-spanning segment; sequence VSVQGIIIYRAAYFGVYDTAK. Residues 200 to 210 lie on the Mitochondrial intermembrane side of the membrane; that stretch reads GMLPDPKNVHI. Residues 211–231 traverse the membrane as a helical segment; the sequence is IVSWMIAQTVTAVAGLVSYPF. At 232–273 the chain is on the mitochondrial matrix side; sequence DTVRRRMMMQSGRKGADIMYTGTVDCWKKIAKDEGAKAFFKG. Arginine 235 is a binding site for ADP. Residues 235 to 240 form an important for transport activity region; sequence RRRMMM. Residues 235–240 carry the Nucleotide carrier signature motif motif; that stretch reads RRRMMM. Lysine 245 and lysine 272 each carry N6-succinyllysine. A helical membrane pass occupies residues 274–291; it reads AWSNVLRGMGGAFVLVLY. Residues 292-298 are Mitochondrial intermembrane-facing; sequence DEIKKYV.

This sequence belongs to the mitochondrial carrier (TC 2.A.29) family. Monomer. Found in a complex with ARL2, ARL2BP and SLC25A4/ANT1. Interacts with ARL2BP. Interacts with TIMM44; leading to inhibit the presequence translocase TIMM23, thereby promoting stabilization of PINK1. Under cell death induction, transglutaminated by TGM2. Transglutamination leads to formation of covalent cross-links between a glutamine and the epsilon-amino group of a lysine residue, forming polymers.

Its subcellular location is the mitochondrion inner membrane. The protein resides in the membrane. It catalyses the reaction ADP(in) + ATP(out) = ADP(out) + ATP(in). The catalysed reaction is H(+)(in) = H(+)(out). With respect to regulation, the matrix-open state (m-state) is inhibited by the membrane-permeable bongkrekic acid (BKA). The cytoplasmic-open state (c-state) is inhibited by the membrane-impermeable toxic inhibitor carboxyatractyloside (CATR). Proton transporter activity is inhibited by ADP:ATP antiporter activity. Functionally, ADP:ATP antiporter that mediates import of ADP into the mitochondrial matrix for ATP synthesis, and export of ATP out to fuel the cell. Cycles between the cytoplasmic-open state (c-state) and the matrix-open state (m-state): operates by the alternating access mechanism with a single substrate-binding site intermittently exposed to either the cytosolic (c-state) or matrix (m-state) side of the inner mitochondrial membrane. In addition to its ADP:ATP antiporter activity, also involved in mitochondrial uncoupling and mitochondrial permeability transition pore (mPTP) activity. Plays a role in mitochondrial uncoupling by acting as a proton transporter: proton transport uncouples the proton flows via the electron transport chain and ATP synthase to reduce the efficiency of ATP production and cause mitochondrial thermogenesis. Proton transporter activity is inhibited by ADP:ATP antiporter activity, suggesting that SLC25A4/ANT1 acts as a master regulator of mitochondrial energy output by maintaining a delicate balance between ATP production (ADP:ATP antiporter activity) and thermogenesis (proton transporter activity). Proton transporter activity requires free fatty acids as cofactor, but does not transport it. Probably mediates mitochondrial uncoupling in tissues that do not express UCP1. Also plays a key role in mPTP opening, a non-specific pore that enables free passage of the mitochondrial membranes to solutes of up to 1.5 kDa, and which contributes to cell death. It is however unclear if SLC25A4/ANT1 constitutes a pore-forming component of mPTP or regulates it. Acts as a regulator of mitophagy independently of ADP:ATP antiporter activity: promotes mitophagy via interaction with TIMM44, leading to inhibit the presequence translocase TIMM23, thereby promoting stabilization of PINK1. The protein is ADP/ATP translocase 1 of Oryctolagus cuniculus (Rabbit).